A 1204-amino-acid chain; its full sequence is MENTQKTVTVPTGPLGYVYACRVEDLDLEEISFLAARSTDSDLALLPLMRNLTVEKTFTSSLAVVSGARTTGLAGAGITLKLTTSHFYPSVFVFHGGKHVLPSSAAPNLTRACNAARERFGFSRCQGPPVDGAVETTGAEICTRLGLEPENTILYLVVTALFKEAVFMCNVFLHYGGLDIVHINHGDVIRIPLFPVQLFMPDVNRLVPDPFNTHHRSIGEGFVYPTPFYNTGLCHLIHDCVIAPMAVALRVRNVTAVARGAAHLAFDENHEGAVLPPDITYTYFQSSSSGTTTARGARRNDVNSTSKPSPSGGFERRLASIMAADTALHAEVIFNTGIYEETPTDIKEWPMFIGMEGTLPRLNALGSYTARVAGVIGAMVFSPNSALYLTEVEDSGMTEAKDGGPGPSFNRFYQFAGPHLAANPQTDRDGHVLSSQSTGSSNTEFSVDYLALICGFGAPLLARLLFYLERCDAGAFTGGHGDALKYVTGTFDSEIPCSLCEKHTRPVCAHTTVHRLRQRMPRFGQATRQPIGVFGTMNSQYSDCDPLGNYAPYLILRKPGDQTEAAKATMQDTYRATLERLFIDLEQERLLDRGAPCSSEGLSSVIVDHPTFRRILDTLRARIEQTTTQFMKVLVETRDYKIREGLSEATHSMALTFDPYSGAFCPITNFLVKRTHLAVVQDLALSQCHCVFYGQQVEGRNFRNQFQPVLRRRFVDLFNGGFISTRSITVTLSEGPVSAPNPTLGQDAPAGRTFDGDLARVSVEVIRDIRVKNRVVFSGNCTNLSEAARARLVGLASAYQRQEKRVDMLHGALGFLLKQFHGLLFPRGMPPNSKSPNPQWFWTLLQRNQMPADKLTHEEITTIAAVKRFTEEYAAINFINLPPTCIGELAQFYMANLILKYCDHSQYLINTLTSIITGARRPRDPSSVLHWIRKDVTSAADIETQAKALLEKTENLPELWTTAFTSTHLVRAAMNQRPMVVLGISISKYHGAAGNNRVFQAGNWSGLNGGKNVCPLFTFDRTRRFIIACPRGGFICPVTGPSSGNRETTLSDQVRGIIVSGGAMVQLAIYATVVRAVGARAQHMAFDDWLSLTDDEFLARDLEELHDQIIQTLETPWTVEGALEAVKILDEKTTAGDGETPTNLAFNFDSCEPSHDTTSNVLNISGSNISGSTVPGLKRPPEDDELFDLSGIPIKHGNITMEMI.

Residues 289–314 (SGTTTARGARRNDVNSTSKPSPSGGF) are disordered. The segment at 497–510 (CSLCEKHTRPVCAH) is a zinc-finger region. Short sequence motifs (required for filament formation) lie at residues 841–842 (FW) and 1146–1148 (FNF). The segment at 1177–1204 (LKRPPEDDELFDLSGIPIKHGNITMEMI) is required for nuclear localization.

Belongs to the herpesviridae major DNA-binding protein family. In terms of assembly, homooligomers. Forms double-helical filaments necessary for the formation of replication compartments within the host nucleus. Interacts with the origin-binding protein. Interacts with the helicase primase complex; this interaction stimulates primer synthesis activity of the helicase-primase complex. Interacts with the DNA polymerase. Interacts with the alkaline exonuclease; this interaction increases its nuclease processivity.

It is found in the host nucleus. In terms of biological role, plays several crucial roles in viral infection. Participates in the opening of the viral DNA origin to initiate replication by interacting with the origin-binding protein. May disrupt loops, hairpins and other secondary structures present on ssDNA to reduce and eliminate pausing of viral DNA polymerase at specific sites during elongation. Promotes viral DNA recombination by performing strand-transfer, characterized by the ability to transfer a DNA strand from a linear duplex to a complementary single-stranded DNA circle. Can also catalyze the renaturation of complementary single strands. Additionally, reorganizes the host cell nucleus, leading to the formation of prereplicative sites and replication compartments. This process is driven by the protein which can form double-helical filaments in the absence of DNA. This is Major DNA-binding protein from Homo sapiens (Human).